A 417-amino-acid chain; its full sequence is Argininosuccinate synthase (417 aa).

An ATP-binding site is contributed by 9–17; that stretch reads AYSGGLDTS. L-citrulline is bound at residue Y87. G117 serves as a coordination point for ATP. Residues T119, N123, and D124 each contribute to the L-aspartate site. Residue N123 coordinates L-citrulline. R127, S175, S184, E260, and Y272 together coordinate L-citrulline.

It belongs to the argininosuccinate synthase family. Type 1 subfamily. As to quaternary structure, homotetramer.

It localises to the cytoplasm. It catalyses the reaction L-citrulline + L-aspartate + ATP = 2-(N(omega)-L-arginino)succinate + AMP + diphosphate + H(+). It participates in amino-acid biosynthesis; L-arginine biosynthesis; L-arginine from L-ornithine and carbamoyl phosphate: step 2/3. The polypeptide is Argininosuccinate synthase (Oceanobacillus iheyensis (strain DSM 14371 / CIP 107618 / JCM 11309 / KCTC 3954 / HTE831)).